A 163-amino-acid polypeptide reads, in one-letter code: UPF0523 protein B (163 aa).

This sequence belongs to the UPF0523 family.

The protein is UPF0523 protein B of Dictyostelium discoideum (Social amoeba).